A 288-amino-acid chain; its full sequence is Sulfur carrier protein FdhD (288 aa).

Cysteine 122 functions as the Cysteine persulfide intermediate in the catalytic mechanism. A Mo-bis(molybdopterin guanine dinucleotide)-binding site is contributed by 268–273 (FVRGER).

It belongs to the FdhD family.

The protein localises to the cytoplasm. Functionally, required for formate dehydrogenase (FDH) activity. Acts as a sulfur carrier protein that transfers sulfur from IscS to the molybdenum cofactor prior to its insertion into FDH. This is Sulfur carrier protein FdhD from Anaeromyxobacter dehalogenans (strain 2CP-C).